Consider the following 400-residue polypeptide: Diphosphomevalonate decarboxylase (400 aa).

(R)-5-diphosphomevalonate is bound by residues tyrosine 19–lysine 22, arginine 75, serine 154–arginine 159, and threonine 210. A disordered region spans residues aspartate 381–lysine 400.

The protein belongs to the diphosphomevalonate decarboxylase family.

The catalysed reaction is (R)-5-diphosphomevalonate + ATP = isopentenyl diphosphate + ADP + phosphate + CO2. Its pathway is isoprenoid biosynthesis; isopentenyl diphosphate biosynthesis via mevalonate pathway; isopentenyl diphosphate from (R)-mevalonate: step 3/3. Its function is as follows. Diphosphomevalonate decarboxylase; part of the second module of ergosterol biosynthesis pathway that includes the middle steps of the pathway. The second module involves the formation of farnesyl diphosphate, which is also an important intermediate in the biosynthesis of ubiquinone, dolichol, heme and prenylated proteins. This module also plays a key role in the biosynthesis of triterpenes such as ganoderic acids (GA), a group of highly oxygenated lanostane-type triterpenoids which are well recognized as a main group of unique bioactive compounds in the medicinal mushroom Ganoderma lucidum. Activity by the mevalonate kinase first converts mevalonate into 5-phosphomevalonate. 5-phosphomevalonate is then further converted to 5-diphosphomevalonate by the phosphomevalonate kinase. The diphosphomevalonate decarboxylase MVD then produces isopentenyl diphosphate. The isopentenyl-diphosphate delta-isomerase then catalyzes the 1,3-allylic rearrangement of the homoallylic substrate isopentenyl (IPP) to its highly electrophilic allylic isomer, dimethylallyl diphosphate (DMAPP). Finally the farnesyl diphosphate synthase FPS catalyzes the sequential condensation of isopentenyl pyrophosphate with dimethylallyl pyrophosphate, and then with the resultant geranylpyrophosphate to the ultimate product farnesyl pyrophosphate. The sequence is that of Diphosphomevalonate decarboxylase from Ganoderma lucidum (Ling zhi medicinal fungus).